Here is a 181-residue protein sequence, read N- to C-terminus: MSVFEAWYMDEESGEDQRLPHKLSPNQPVSVQQLEHIGVFHWKLNADIYENDPELQKIREEKGYSFMDIITIHPDKLPDYQNKLKMFYEEHLHLDDEIRYILEGSSYFDVRDEGDRWIRIAVSKGDLITLPAGIYHRFTVDESNYTKAMRLFVGEPVWKAYNRPADDFDIRKEYVNSLGSS.

Residues His91, His93, Glu97, and His136 each contribute to the Fe(2+) site. Ni(2+) contacts are provided by His91, His93, Glu97, and His136.

The protein belongs to the acireductone dioxygenase (ARD) family. Monomer. Interacts with MMP14. It depends on Fe(2+) as a cofactor. The cofactor is Ni(2+).

Its subcellular location is the cytoplasm. The protein resides in the nucleus. The protein localises to the cell membrane. It catalyses the reaction 1,2-dihydroxy-5-(methylsulfanyl)pent-1-en-3-one + O2 = 4-methylsulfanyl-2-oxobutanoate + formate + 2 H(+). The catalysed reaction is 1,2-dihydroxy-5-(methylsulfanyl)pent-1-en-3-one + O2 = 3-(methylsulfanyl)propanoate + CO + formate + 2 H(+). It functions in the pathway amino-acid biosynthesis; L-methionine biosynthesis via salvage pathway; L-methionine from S-methyl-5-thio-alpha-D-ribose 1-phosphate: step 5/6. In terms of biological role, catalyzes 2 different reactions between oxygen and the acireductone 1,2-dihydroxy-3-keto-5-methylthiopentene (DHK-MTPene) depending upon the metal bound in the active site. Fe-containing acireductone dioxygenase (Fe-ARD) produces formate and 2-keto-4-methylthiobutyrate (KMTB), the alpha-ketoacid precursor of methionine in the methionine recycle pathway. Ni-containing acireductone dioxygenase (Ni-ARD) produces methylthiopropionate, carbon monoxide and formate, and does not lie on the methionine recycle pathway. The protein is Acireductone dioxygenase (adi1) of Danio rerio (Zebrafish).